We begin with the raw amino-acid sequence, 113 residues long: Hydrogenase maturation factor HypA (113 aa).

His-2 is a Ni(2+) binding site. Zn(2+) is bound by residues Cys-73, Cys-76, Cys-89, and Cys-92.

This sequence belongs to the HypA/HybF family.

In terms of biological role, involved in the maturation of [NiFe] hydrogenases. Required for nickel insertion into the metal center of the hydrogenase. The chain is Hydrogenase maturation factor HypA from Dechloromonas aromatica (strain RCB).